A 426-amino-acid polypeptide reads, in one-letter code: Probable serine/threonine-protein kinase PBL3 (426 aa).

Positions 1-42 (MGNCLDSSAKVDSSSHSPHANSASLSSRVSSKTSRSTVPSSL) are disordered. Residue Gly2 is the site of N-myristoyl glycine attachment. The S-palmitoyl cysteine moiety is linked to residue Cys4. Over residues 7-42 (SSAKVDSSSHSPHANSASLSSRVSSKTSRSTVPSSL) the composition is skewed to low complexity. Thr72 bears the Phosphothreonine mark. Residues 83–366 (FRPDSLLGEG…SEVLAKLDQL (284 aa)) enclose the Protein kinase domain. ATP contacts are provided by residues 89–97 (LGEGGFGYV) and Lys121. Residue Tyr166 is modified to Phosphotyrosine. The active-site Proton acceptor is Asp216. Ser250 is modified (phosphoserine). A phosphothreonine mark is found at Thr251 and Thr256. Residue Tyr264 is modified to Phosphotyrosine. Over residues 367–394 (ESTKPGTGVGNRQAQIDSPRGSNGSIVQ) the composition is skewed to polar residues. The segment at 367–426 (ESTKPGTGVGNRQAQIDSPRGSNGSIVQKSPRRYSYDRPLLHITPGASPLPTHNHSPRVR) is disordered.

This sequence belongs to the protein kinase superfamily. Ser/Thr protein kinase family. Interacts with the Xanthomonas campestris effector XopAC/AvrAC. In terms of tissue distribution, strongly expressed in leaves, moderately in flowers, and barely in roots.

It localises to the cell membrane. The protein resides in the nucleus. The catalysed reaction is L-seryl-[protein] + ATP = O-phospho-L-seryl-[protein] + ADP + H(+). It carries out the reaction L-threonyl-[protein] + ATP = O-phospho-L-threonyl-[protein] + ADP + H(+). May be involved in plant defense signaling. The protein is Probable serine/threonine-protein kinase PBL3 of Arabidopsis thaliana (Mouse-ear cress).